The primary structure comprises 798 residues: MNLQLIFWIGLISSVCYVFGQADENRCLKANAKSCGECIQAGPNCGWCTNSTFLQEGMPTSARCDDLEALRKKGCHPDDIENPRGSKNIKKNKNVTNRSKGTAEKLQPEDITQIQPQQLVLQLRSGEPQTFTLKFKRAEDYPIDLYYLMDLSYSMKDDLENVKSLGTDLMNEMRRITSDFRIGFGSFVEKTVMPYISTTPAKLRNPCTSEQNCTSPFSYKNVLSLTDKGEVFNELVGKQRISGNLDSPEGGFDAIMQVAVCGSLIGWRNVTRLLVFSTDAGFHFAGDGKLGGIVLPNDGHCHLENDVYTMSHYYDYPSIAHLVQKLSENNIQTIFAVTEEFQPVYKELKNLIPKSAVGTLSANSSNVIQLIIDAYNSLSSEVILENSKLPEGVTINYKSYCKNGVNGTGENGRKCSNISIGDEVQFEISITANKCPNKNSETIKIKPLGFTEEVEIILQFICECECQSEGIPSSPKCHDGNGTFECGACRCNEGRVGRHCECSTDEVNSEDMDAYCRKENSSEICTNNGECVCGQCVCRKRDNTNEIYSGKFCECDNFNCDRSNGLICGGNGVCKCRVCECNPNYTGSACDCSLDTTSCMAVNGQICNGRGVCECGVCKCTDPKFQGPTCEMCQTCLGVCAEHKECVQCRAFNKGEKKDTCAQECSHFNITKVENRDKLPQPGQVDPLSHCKEKDVDDCWFYFTYSVNGNNEATVHVVETPECPTGPDIIPIVAGVVAGIVLIGLALLLIWKLLMIIHDRREFAKFEKEKMNAKWDTGENPIYKSAVTTVVNPKYEGK.

The N-terminal stretch at 1-20 (MNLQLIFWIGLISSVCYVFG) is a signal peptide. At 21–728 (QADENRCLKA…ETPECPTGPD (708 aa)) the chain is on the extracellular side. A PSI domain is found at 26–76 (RCLKANAKSCGECIQAGPNCGWCTNSTFLQEGMPTSARCDDLEALRKKGCH). Disulfide bonds link cysteine 27-cysteine 45, cysteine 35-cysteine 464, cysteine 38-cysteine 64, cysteine 48-cysteine 75, cysteine 207-cysteine 213, cysteine 261-cysteine 301, cysteine 401-cysteine 415, cysteine 435-cysteine 462, cysteine 466-cysteine 486, cysteine 477-cysteine 489, cysteine 491-cysteine 500, cysteine 502-cysteine 533, cysteine 516-cysteine 531, cysteine 525-cysteine 536, cysteine 538-cysteine 553, cysteine 555-cysteine 576, cysteine 560-cysteine 574, cysteine 568-cysteine 579, cysteine 581-cysteine 590, cysteine 592-cysteine 615, cysteine 599-cysteine 613, cysteine 607-cysteine 618, cysteine 620-cysteine 630, cysteine 633-cysteine 636, cysteine 640-cysteine 691, cysteine 646-cysteine 665, cysteine 649-cysteine 661, and cysteine 699-cysteine 723. N-linked (GlcNAc...) asparagine glycosylation is present at asparagine 50. Residues 75-84 (CHPDDIENPR) show a composition bias toward basic and acidic residues. The tract at residues 75-107 (CHPDDIENPRGSKNIKKNKNVTNRSKGTAEKLQ) is disordered. N-linked (GlcNAc...) asparagine glycosylation is found at asparagine 94 and asparagine 97. The VWFA domain occupies 140 to 378 (DYPIDLYYLM…QLIIDAYNSL (239 aa)). Residues serine 152 and serine 154 each coordinate Mg(2+). Residues serine 154, aspartate 157, aspartate 158, and glutamate 189 each contribute to the Ca(2+) site. The segment at 207-213 (CTSEQNC) is CX3CL1-binding. Asparagine 212 carries an N-linked (GlcNAc...) asparagine glycan. Residues asparagine 244, aspartate 246, proline 248, and glutamate 249 each coordinate Ca(2+). Glutamate 249 provides a ligand contact to Mg(2+). The N-linked (GlcNAc...) asparagine glycan is linked to asparagine 269. Residues 295 to 314 (LPNDGHCHLENDVYTMSHYY) are CX3CL1-binding. Alanine 362 provides a ligand contact to Ca(2+). Residues asparagine 363, asparagine 406, and asparagine 417 are each glycosylated (N-linked (GlcNAc...) asparagine). Residues 383–465 (ILENSKLPEG…IILQFICECE (83 aa)) form an interaction with TMEM182 region. 4 I-EGF domains span residues 466-501 (CQSE…RHCE), 502-554 (CSTD…KFCE), 555-591 (CDNF…SACD), and 592-631 (CSLD…PTCE). Asparagine 481 carries an N-linked (GlcNAc...) asparagine glycan. An N-linked (GlcNAc...) asparagine glycan is attached at asparagine 520. Asparagine 584 is a glycosylation site (N-linked (GlcNAc...) asparagine). N-linked (GlcNAc...) asparagine glycosylation is present at asparagine 669. Residues 729–749 (IIPIVAGVVAGIVLIGLALLL) form a helical membrane-spanning segment. Residues 750 to 798 (IWKLLMIIHDRREFAKFEKEKMNAKWDTGENPIYKSAVTTVVNPKYEGK) lie on the Cytoplasmic side of the membrane. Positions 762-767 (EFAKFE) are signal for sorting from recycling endosomes; interaction with ACAP1. Threonine 777 bears the Phosphothreonine mark. Tyrosine 783 carries the phosphotyrosine modification. A Phosphoserine modification is found at serine 785. The interaction with ITGB1BP1 stretch occupies residues 785-792 (SAVTTVVN). The residue at position 789 (threonine 789) is a Phosphothreonine. At lysine 794 the chain carries N6-acetyllysine; alternate. A Glycyl lysine isopeptide (Lys-Gly) (interchain with G-Cter in SUMO1); alternate cross-link involves residue lysine 794.

This sequence belongs to the integrin beta chain family. Interacts with seprase FAP (seprase); the interaction occurs at the cell surface of invadopodia membrane in a collagen-dependent manner. Heterodimer of an alpha and a beta subunit. Beta-1 associates with either alpha-1, alpha-2, alpha-3, alpha-4, alpha-5, alpha-6, alpha-7, alpha-8, alpha-9, alpha-10, alpha-11 or alpha-V. ITGA6:ITGB1 is found in a complex with CD9; interaction takes place in oocytes and is involved in sperm-egg fusion. Binds LGALS3BP and NMRK2, when associated with alpha-7, but not with alpha-5. Interacts with FLNA, FLNB, FLNC and RANBP9. Interacts with KRT1 in the presence of RACK1 and SRC. Interacts with JAML; integrin alpha-4/beta-1 may regulate leukocyte to endothelial cells adhesion by controlling JAML homodimerization. Interacts with RAB21. Interacts (via the cytoplasmic region) with RAB25 (via the hypervariable C-terminal region). Interacts with MYO10. Interacts with ITGB1BP1 (via C-terminal region); the interaction is a prerequisite for focal adhesion disassembly. Interacts with TLN1; the interaction is prevented by competitive binding of ITGB1BP1. Interacts with ACAP1; required for ITGB1 recycling. Interacts with ASAP3. Interacts with FERMT2; the interaction is inhibited in presence of ITGB1BP1. Interacts with DAB2. Interacts with FGR and HCK. Interacts with alpha-7A and alpha-7B in adult skeletal muscle. Interacts with alpha-7B in cardiomyocytes of adult heart. Interacts with EMP2; the interaction may be direct or indirect and ITGB1 has a heterodimer form. ITGA5:ITGB1 interacts with CCN3. ITGA4:ITGB1 is found in a ternary complex with CX3CR1 and CX3CL1. ITGA5:ITGB1 interacts with FBN1. ITGA5:ITGB1 interacts with IL1B. Interacts with MDK. ITGA4:ITGB1 interacts with MDK; this interaction mediates MDK-induced osteoblast cells migration through PXN phosphorylation. ITGA6:ITGB1 interacts with MDK; this interaction mediates MDK-induced neurite-outgrowth. ITGA5:ITGB1 interacts with ACE2. Interacts with TMEM182 and LAMB1. Interacts with tensin TNS3; TNS3 also interacts with PEAK1, thus acting as an adapter molecule to bridge the association of PEAK1 with ITGB1. Interacts with tensin TNS4; the interaction displaces tensin TNS3 from the ITGB1 cytoplasmic tail and promotes ITGB1 stability. Integrin ITGA9:ITGB1 interacts with SPP1/OPN (via N-terminus). Integrin ITGA9:ITGB1 interacts with TNC/TNFN3 (via the 3rd Fibronectin type-III domain). Integrins ITGA4:ITGB1 and ITGA9:ITGB1 interact with SVEP1 (via Sushi domain 21); thereby inhibit Ca(2+) intracellular signaling and as a result repress vasocontraction. ITGA4:ITGB1 and ITGA5:ITGB1 interacts with SELP. Interacts with CD248. ITGA5:ITGB1 interacts with IGFBP1. ITGA4:ITGB1 interacts with BCAM. Interacts with ADGRG6. In terms of tissue distribution, expressed in the spleen, thymus, alveolar macrophages, bone marrow, liver and kidney.

The protein localises to the cell membrane. It is found in the cell projection. The protein resides in the invadopodium membrane. Its subcellular location is the ruffle membrane. It localises to the recycling endosome. The protein localises to the melanosome. It is found in the lamellipodium. The protein resides in the ruffle. Its subcellular location is the cell junction. It localises to the focal adhesion. Its function is as follows. Integrins alpha-1/beta-1, alpha-2/beta-1, alpha-10/beta-1 and alpha-11/beta-1 are receptors for collagen. Integrins alpha-1/beta-1 and alpha-2/beta-2 recognize the proline-hydroxylated sequence G-F-P-G-E-R in collagen. Integrins alpha-2/beta-1, alpha-3/beta-1, alpha-4/beta-1, alpha-5/beta-1, alpha-8/beta-1, alpha-10/beta-1, alpha-11/beta-1 and alpha-V/beta-1 are receptors for fibronectin. Alpha-4/beta-1 recognizes one or more domains within the alternatively spliced CS-1 and CS-5 regions of fibronectin. Integrin alpha-5/beta-1 is a receptor for fibrinogen. Integrin alpha-1/beta-1, alpha-2/beta-1, alpha-6/beta-1 and alpha-7/beta-1 are receptors for lamimin. Integrin alpha-6/beta-1 (ITGA6:ITGB1) is present in oocytes and is involved in sperm-egg fusion. Integrin alpha-4/beta-1 is a receptor for VCAM1 and recognizes the sequence Q-I-D-S in VCAM1. Integrin alpha-9/beta-1 is a receptor for VCAM1, cytotactin and osteopontin. It recognizes the sequence A-E-I-D-G-I-E-L in cytotactin. Integrin alpha-3/beta-1 is a receptor for epiligrin, thrombospondin and CSPG4. Integrin alpha-3/beta-1 provides a docking site for FAP (seprase) at invadopodia plasma membranes in a collagen-dependent manner and hence may participate in the adhesion, formation of invadopodia and matrix degradation processes, promoting cell invasion. Alpha-3/beta-1 may mediate with LGALS3 the stimulation by CSPG4 of endothelial cells migration. Integrin alpha-V/beta-1 is a receptor for vitronectin. Beta-1 integrins recognize the sequence R-G-D in a wide array of ligands. When associated with alpha-7/beta-1 integrin, regulates cell adhesion and laminin matrix deposition. Involved in promoting endothelial cell motility and angiogenesis. Involved in osteoblast compaction through the fibronectin fibrillogenesis cell-mediated matrix assembly process and the formation of mineralized bone nodules. May be involved in up-regulation of the activity of kinases such as PKC via binding to KRT1. Together with KRT1 and RACK1, serves as a platform for SRC activation or inactivation. Plays a mechanistic adhesive role during telophase, required for the successful completion of cytokinesis. ITGA4:ITGB1 binds to fractalkine (CX3CL1) and may act as its coreceptor in CX3CR1-dependent fractalkine signaling. ITGA4:ITGB1 and ITGA5:ITGB1 bind to PLA2G2A via a site (site 2) which is distinct from the classical ligand-binding site (site 1) and this induces integrin conformational changes and enhanced ligand binding to site 1. ITGA5:ITGB1 acts as a receptor for fibrillin-1 (FBN1) and mediates R-G-D-dependent cell adhesion to FBN1. ITGA5:ITGB1 acts as a receptor for fibronectin FN1 and mediates R-G-D-dependent cell adhesion to FN1. ITGA5:ITGB1 is a receptor for IL1B and binding is essential for IL1B signaling. ITGA5:ITGB3 is a receptor for soluble CD40LG and is required for CD40/CD40LG signaling. Plays an important role in myoblast differentiation and fusion during skeletal myogenesis. ITGA9:ITGB1 may play a crucial role in SVEP1/polydom-mediated myoblast cell adhesion. Integrins ITGA9:ITGB1 and ITGA4:ITGB1 repress PRKCA-mediated L-type voltage-gated channel Ca(2+) influx and ROCK-mediated calcium sensitivity in vascular smooth muscle cells via their interaction with SVEP1, thereby inhibit vasocontraction. This Sus scrofa (Pig) protein is Integrin beta-1 (ITGB1).